Reading from the N-terminus, the 211-residue chain is Protein Nef (211 aa).

Glycine 2 is lipidated: N-myristoyl glycine; by host. Serine 6 is subject to Phosphoserine; by host. The interval 67 to 70 is acidic; interacts with host PACS1 and PACS2; stabilizes the interaction of NEF/MHC-I with host AP1M1; necessary for MHC-I internalization; sequence EDEE. Residues 74-83 are SH3-binding; interaction with Src family tyrosine kinases; sequence PVRPQVPLRP. Residues 77–80 carry the PxxP; stabilizes the interaction of NEF/MHC-I with host AP1M1; necessary for MHC-I internalization motif; that stretch reads PQVP. The interval 113–129 is mediates dimerization, Nef-PTE1 interaction; sequence DILDLWVYHTQGYFPDW. The interval 153–185 is binding to ATP6V1H; that stretch reads MDPDQVEEANEGENNSLLHPISLHGMDDPEKEV. The Dileucine internalization motif; necessary for CD4 internalization motif lies at 169-170; it reads LL. A Diacidic; necessary for CD4 internalization motif is present at residues 179–180; sequence DD.

The protein belongs to the lentivirus primate group Nef protein family. In terms of assembly, monomer; cytosolic form. Homodimer; membrane bound form. Interacts with Nef associated p21-activated kinase (PAK2); this interaction activates PAK2. Associates with the Nef-MHC-I-AP1 complex; this complex is required for MHC-I internalization. Interacts (via C-terminus) with host PI3-kinase. Interacts with host PACS1; this interaction seems to be weak. Interacts with host PACS2. Interacts with host LCK and MAPK3; these interactions inhibit the kinase activity of the latter. Interacts with host ATP6V1H; this interaction may play a role in CD4 endocytosis. Associates with the CD4-Nef-AP2 complex; this complex is required for CD4 internalization. Interacts with host AP2 subunit alpha and AP2 subunit sigma2. Interacts with TCR-zeta chain; this interaction up-regulates the Fas ligand (FasL) surface expression. Interacts with host HCK, LYN, and SRC; these interactions activate the Src family kinases. Interacts with MAP3K5; this interaction inhibits the Fas and TNFR-mediated death signals. Interacts with beta-COP and PTE1. Interacts with human RACK1; this increases Nef phosphorylation by PKC. Interacts with TP53; this interaction decreases the half-life of TP53, protecting the infected cell against p53-mediated apoptosis. In terms of processing, the virion-associated Nef proteins are cleaved by the viral protease to release the soluble C-terminal core protein. Nef is probably cleaved concomitantly with viral structural proteins on maturation of virus particles. Myristoylated. Post-translationally, phosphorylated on serine residues, probably by host PKCdelta and theta.

The protein resides in the host cell membrane. The protein localises to the virion. Its subcellular location is the secreted. It localises to the host Golgi apparatus membrane. In terms of biological role, factor of infectivity and pathogenicity, required for optimal virus replication. Alters numerous pathways of T-lymphocyte function and down-regulates immunity surface molecules in order to evade host defense and increase viral infectivity. Alters the functionality of other immunity cells, like dendritic cells, monocytes/macrophages and NK cells. In infected CD4(+) T-lymphocytes, down-regulates the surface MHC-I, mature MHC-II, CD4, CD28, CCR5 and CXCR4 molecules. Mediates internalization and degradation of host CD4 through the interaction of with the cytoplasmic tail of CD4, the recruitment of AP-2 (clathrin adapter protein complex 2), internalization through clathrin coated pits, and subsequent transport to endosomes and lysosomes for degradation. Diverts host MHC-I molecules to the trans-Golgi network-associated endosomal compartments by an endocytic pathway to finally target them for degradation. MHC-I down-regulation may involve AP-1 (clathrin adapter protein complex 1) or possibly Src family kinase-ZAP70/Syk-PI3K cascade recruited by PACS2. In consequence infected cells are masked for immune recognition by cytotoxic T-lymphocytes. Decreasing the number of immune receptors also prevents reinfection by more HIV particles (superinfection). Down-regulates host SERINC3 and SERINC5 thereby excluding these proteins from the viral particles. Virion infectivity is drastically higher when SERINC3 or SERINC5 are excluded from the viral envelope, because these host antiviral proteins impair the membrane fusion event necessary for subsequent virion penetration. Its function is as follows. Bypasses host T-cell signaling by inducing a transcriptional program nearly identical to that of anti-CD3 cell activation. Interaction with TCR-zeta chain up-regulates the Fas ligand (FasL). Increasing surface FasL molecules and decreasing surface MHC-I molecules on infected CD4(+) cells send attacking cytotoxic CD8+ T-lymphocytes into apoptosis. Functionally, plays a role in optimizing the host cell environment for viral replication without causing cell death by apoptosis. Protects the infected cells from apoptosis in order to keep them alive until the next virus generation is ready to strike. Inhibits the Fas and TNFR-mediated death signals by blocking MAP3K5/ASK1. Decreases the half-life of TP53, protecting the infected cell against p53-mediated apoptosis. Inhibits the apoptotic signals regulated by the Bcl-2 family proteins through the formation of a Nef/PI3-kinase/PAK2 complex that leads to activation of PAK2 and induces phosphorylation of host BAD. In terms of biological role, extracellular Nef protein targets CD4(+) T-lymphocytes for apoptosis by interacting with CXCR4 surface receptors. This chain is Protein Nef, found in Homo sapiens (Human).